The sequence spans 317 residues: tRNA dimethylallyltransferase (317 aa).

An ATP-binding site is contributed by 13 to 20; that stretch reads GPTASGKS. 15–20 contributes to the substrate binding site; the sequence is TASGKS.

It belongs to the IPP transferase family. Monomer. It depends on Mg(2+) as a cofactor.

The catalysed reaction is adenosine(37) in tRNA + dimethylallyl diphosphate = N(6)-dimethylallyladenosine(37) in tRNA + diphosphate. In terms of biological role, catalyzes the transfer of a dimethylallyl group onto the adenine at position 37 in tRNAs that read codons beginning with uridine, leading to the formation of N6-(dimethylallyl)adenosine (i(6)A). The polypeptide is tRNA dimethylallyltransferase (Kineococcus radiotolerans (strain ATCC BAA-149 / DSM 14245 / SRS30216)).